A 112-amino-acid polypeptide reads, in one-letter code: UPF0060 membrane protein Mpe_A1656 (112 aa).

Helical transmembrane passes span 9–29 (GLFF…WLVL), 34–54 (SAWL…LLTL), 65–85 (AYGG…DGVV), and 91–111 (LVGG…PRAA).

The protein belongs to the UPF0060 family.

It localises to the cell inner membrane. The chain is UPF0060 membrane protein Mpe_A1656 from Methylibium petroleiphilum (strain ATCC BAA-1232 / LMG 22953 / PM1).